Consider the following 363-residue polypeptide: UDP-N-acetylglucosamine--N-acetylmuramyl-(pentapeptide) pyrophosphoryl-undecaprenol N-acetylglucosamine transferase (363 aa).

UDP-N-acetyl-alpha-D-glucosamine contacts are provided by residues 16 to 18, Asn128, Arg167, Ser195, Ile249, 268 to 273, and Gln294; these read TGG and ALTVSE.

Belongs to the glycosyltransferase 28 family. MurG subfamily.

The protein resides in the cell inner membrane. It catalyses the reaction di-trans,octa-cis-undecaprenyl diphospho-N-acetyl-alpha-D-muramoyl-L-alanyl-D-glutamyl-meso-2,6-diaminopimeloyl-D-alanyl-D-alanine + UDP-N-acetyl-alpha-D-glucosamine = di-trans,octa-cis-undecaprenyl diphospho-[N-acetyl-alpha-D-glucosaminyl-(1-&gt;4)]-N-acetyl-alpha-D-muramoyl-L-alanyl-D-glutamyl-meso-2,6-diaminopimeloyl-D-alanyl-D-alanine + UDP + H(+). It participates in cell wall biogenesis; peptidoglycan biosynthesis. Cell wall formation. Catalyzes the transfer of a GlcNAc subunit on undecaprenyl-pyrophosphoryl-MurNAc-pentapeptide (lipid intermediate I) to form undecaprenyl-pyrophosphoryl-MurNAc-(pentapeptide)GlcNAc (lipid intermediate II). This chain is UDP-N-acetylglucosamine--N-acetylmuramyl-(pentapeptide) pyrophosphoryl-undecaprenol N-acetylglucosamine transferase, found in Marinobacter nauticus (strain ATCC 700491 / DSM 11845 / VT8) (Marinobacter aquaeolei).